The chain runs to 54 residues: uncharacterized protein (54 aa).

An N-terminal signal peptide occupies residues 1 to 13; sequence MLLCFHMCQRIMW.

The protein resides in the secreted. This is an uncharacterized protein from Saccharomyces cerevisiae (strain ATCC 204508 / S288c) (Baker's yeast).